Here is a 231-residue protein sequence, read N- to C-terminus: Large ribosomal subunit protein uL1 (231 aa).

The protein belongs to the universal ribosomal protein uL1 family. In terms of assembly, part of the 50S ribosomal subunit.

Functionally, binds directly to 23S rRNA. The L1 stalk is quite mobile in the ribosome, and is involved in E site tRNA release. Its function is as follows. Protein L1 is also a translational repressor protein, it controls the translation of the L11 operon by binding to its mRNA. The polypeptide is Large ribosomal subunit protein uL1 (Thioalkalivibrio sulfidiphilus (strain HL-EbGR7)).